We begin with the raw amino-acid sequence, 1127 residues long: Carbamoyl phosphate synthase large chain (1127 aa).

A carboxyphosphate synthetic domain region spans residues 1–402 (MPKRTDIKSV…SLGKAMRSID (402 aa)). Arg129, Arg169, Gly175, Gly176, Glu208, Ile210, Glu215, Gly241, Val242, His243, Gln285, and Glu299 together coordinate ATP. One can recognise an ATP-grasp 1 domain in the interval 133 to 328 (KKVVDEAGAE…IAKIATKLAL (196 aa)). Residues Gln285, Glu299, and Asn301 each coordinate Mg(2+). Gln285, Glu299, and Asn301 together coordinate Mn(2+). Positions 403–551 (KRHMGFNWDG…YYYSCYADET (149 aa)) are oligomerization domain. Positions 552 to 962 (ELRPREREAV…AFAKSQLAAY (411 aa)) are carbamoyl phosphate synthetic domain. One can recognise an ATP-grasp 2 domain in the interval 681 to 881 (GEVLKKAEMN…LAKAAARIMA (201 aa)). ATP contacts are provided by Arg717, Lys765, Leu767, Glu772, Gly797, Val798, His799, Ser800, Gln840, and Glu852. Mg(2+) contacts are provided by Gln840, Glu852, and Asn854. Gln840, Glu852, and Asn854 together coordinate Mn(2+). The segment at 963–1127 (DGGLPTHGNV…QLFELERREF (165 aa)) is allosteric domain. The MGS-like domain maps to 964–1127 (GGLPTHGNVF…QLFELERREF (164 aa)).

It belongs to the CarB family. In terms of assembly, composed of two chains; the small (or glutamine) chain promotes the hydrolysis of glutamine to ammonia, which is used by the large (or ammonia) chain to synthesize carbamoyl phosphate. Tetramer of heterodimers (alpha,beta)4. Mg(2+) is required as a cofactor. The cofactor is Mn(2+).

It catalyses the reaction hydrogencarbonate + L-glutamine + 2 ATP + H2O = carbamoyl phosphate + L-glutamate + 2 ADP + phosphate + 2 H(+). It carries out the reaction hydrogencarbonate + NH4(+) + 2 ATP = carbamoyl phosphate + 2 ADP + phosphate + 2 H(+). The protein operates within amino-acid biosynthesis; L-arginine biosynthesis; carbamoyl phosphate from bicarbonate: step 1/1. It functions in the pathway pyrimidine metabolism; UMP biosynthesis via de novo pathway; (S)-dihydroorotate from bicarbonate: step 1/3. Its function is as follows. Large subunit of the glutamine-dependent carbamoyl phosphate synthetase (CPSase). CPSase catalyzes the formation of carbamoyl phosphate from the ammonia moiety of glutamine, carbonate, and phosphate donated by ATP, constituting the first step of 2 biosynthetic pathways, one leading to arginine and/or urea and the other to pyrimidine nucleotides. The large subunit (synthetase) binds the substrates ammonia (free or transferred from glutamine from the small subunit), hydrogencarbonate and ATP and carries out an ATP-coupled ligase reaction, activating hydrogencarbonate by forming carboxy phosphate which reacts with ammonia to form carbamoyl phosphate. This is Carbamoyl phosphate synthase large chain from Bifidobacterium longum (strain DJO10A).